The chain runs to 338 residues: Aspartate--ammonia ligase (338 aa).

Belongs to the class-II aminoacyl-tRNA synthetase family. AsnA subfamily.

It is found in the cytoplasm. It catalyses the reaction L-aspartate + NH4(+) + ATP = L-asparagine + AMP + diphosphate + H(+). It functions in the pathway amino-acid biosynthesis; L-asparagine biosynthesis; L-asparagine from L-aspartate (ammonia route): step 1/1. The protein is Aspartate--ammonia ligase of Lactobacillus delbrueckii subsp. bulgaricus (strain ATCC BAA-365 / Lb-18).